The following is a 473-amino-acid chain: MGAVISLPVSMAGSFVASCFGGCCSNLVTKTASSLGSSSLGTRLLYAVWLLLNSLISWVSYSANKSILWPGKTCTGTGECGFFTVHRLNFALGCLHLILALVLTGVKSTNDVRAALQNSWWSLKFILYLCLIVLSFVIPNDFYIFFSKWVSVPSGAIFILVGLILLVDFAHEWAETCISHVESEDEDSSFWQRFLVLGTTSMYTASIIMTVVMYVMFCHQQCNMNQTAVTVNLILTVITLVLSVNPKIQEANPKSGLAQSSMVSVYCTYLTMSAMSSEPDDKMCNPLVRSSGTRKFSIILGSLFTFIAIAYTTTRAAANSAFQGTNTNGAIYLGNDIEYEGLGGQTRNQLRYEAIKQAVEEGSLPESALYDTAWLGTSSPTGAMDNQNDDERTGTKYNYTLFHVIFFLATQWIAILLTINVTQDDVGDFIPVGRTYFYSWVKIVSAWICYALYGWTVVAPAIMPDRFDYENYY.

Over 1–6 (MGAVIS) the chain is Cytoplasmic. A helical membrane pass occupies residues 7–29 (LPVSMAGSFVASCFGGCCSNLVT). Topologically, residues 30-38 (KTASSLGSS) are vacuolar. Residues 39-61 (SLGTRLLYAVWLLLNSLISWVSY) traverse the membrane as a helical segment. Residues 62–81 (SANKSILWPGKTCTGTGECG) are Cytoplasmic-facing. The chain crosses the membrane as a helical span at residues 82–104 (FFTVHRLNFALGCLHLILALVLT). Residues 105-118 (GVKSTNDVRAALQN) are Vacuolar-facing. A helical transmembrane segment spans residues 119–138 (SWWSLKFILYLCLIVLSFVI). The Cytoplasmic portion of the chain corresponds to 139–144 (PNDFYI). The helical transmembrane segment at 145–167 (FFSKWVSVPSGAIFILVGLILLV) threads the bilayer. Residues 168–194 (DFAHEWAETCISHVESEDEDSSFWQRF) lie on the Vacuolar side of the membrane. A helical transmembrane segment spans residues 195 to 217 (LVLGTTSMYTASIIMTVVMYVMF). At 218–228 (CHQQCNMNQTA) the chain is on the cytoplasmic side. The chain crosses the membrane as a helical span at residues 229-246 (VTVNLILTVITLVLSVNP). The Vacuolar portion of the chain corresponds to 247–295 (KIQEANPKSGLAQSSMVSVYCTYLTMSAMSSEPDDKMCNPLVRSSGTRK). The chain crosses the membrane as a helical span at residues 296 to 318 (FSIILGSLFTFIAIAYTTTRAAA). At 319-398 (NSAFQGTNTN…DDERTGTKYN (80 aa)) the chain is on the cytoplasmic side. Residues 399–421 (YTLFHVIFFLATQWIAILLTINV) traverse the membrane as a helical segment. At 422 to 435 (TQDDVGDFIPVGRT) the chain is on the vacuolar side. The helical transmembrane segment at 436–458 (YFYSWVKIVSAWICYALYGWTVV) threads the bilayer. Residues 459-473 (APAIMPDRFDYENYY) are Cytoplasmic-facing.

This sequence belongs to the TDE1 family.

The protein localises to the membrane. The protein is Membrane protein TMS1 (TMS1) of Saccharomyces cerevisiae (strain ATCC 204508 / S288c) (Baker's yeast).